A 256-amino-acid chain; its full sequence is Imidazole glycerol phosphate synthase subunit HisF (256 aa).

Catalysis depends on residues Asp-12 and Asp-131.

It belongs to the HisA/HisF family. Heterodimer of HisH and HisF.

It localises to the cytoplasm. It carries out the reaction 5-[(5-phospho-1-deoxy-D-ribulos-1-ylimino)methylamino]-1-(5-phospho-beta-D-ribosyl)imidazole-4-carboxamide + L-glutamine = D-erythro-1-(imidazol-4-yl)glycerol 3-phosphate + 5-amino-1-(5-phospho-beta-D-ribosyl)imidazole-4-carboxamide + L-glutamate + H(+). The protein operates within amino-acid biosynthesis; L-histidine biosynthesis; L-histidine from 5-phospho-alpha-D-ribose 1-diphosphate: step 5/9. Its function is as follows. IGPS catalyzes the conversion of PRFAR and glutamine to IGP, AICAR and glutamate. The HisF subunit catalyzes the cyclization activity that produces IGP and AICAR from PRFAR using the ammonia provided by the HisH subunit. The sequence is that of Imidazole glycerol phosphate synthase subunit HisF from Pseudomonas syringae pv. syringae (strain B728a).